The chain runs to 471 residues: 3-isopropylmalate dehydratase large subunit (471 aa).

[4Fe-4S] cluster is bound by residues Cys-347, Cys-407, and Cys-410.

Belongs to the aconitase/IPM isomerase family. LeuC type 1 subfamily. In terms of assembly, heterodimer of LeuC and LeuD. [4Fe-4S] cluster is required as a cofactor.

It carries out the reaction (2R,3S)-3-isopropylmalate = (2S)-2-isopropylmalate. The protein operates within amino-acid biosynthesis; L-leucine biosynthesis; L-leucine from 3-methyl-2-oxobutanoate: step 2/4. Its function is as follows. Catalyzes the isomerization between 2-isopropylmalate and 3-isopropylmalate, via the formation of 2-isopropylmaleate. This Buchnera aphidicola subsp. Acyrthosiphon pisum (strain APS) (Acyrthosiphon pisum symbiotic bacterium) protein is 3-isopropylmalate dehydratase large subunit.